The following is a 325-amino-acid chain: Biotin synthase (325 aa).

A Radical SAM core domain is found at 49–279 (VGDKVELCSI…DKNIRYAGGR (231 aa)). The [4Fe-4S] cluster site is built by C66, C70, and C73. Positions 144, 204, and 274 each coordinate [2Fe-2S] cluster.

It belongs to the radical SAM superfamily. Biotin synthase family. In terms of assembly, homodimer. The cofactor is [4Fe-4S] cluster. It depends on [2Fe-2S] cluster as a cofactor.

The catalysed reaction is (4R,5S)-dethiobiotin + (sulfur carrier)-SH + 2 reduced [2Fe-2S]-[ferredoxin] + 2 S-adenosyl-L-methionine = (sulfur carrier)-H + biotin + 2 5'-deoxyadenosine + 2 L-methionine + 2 oxidized [2Fe-2S]-[ferredoxin]. It participates in cofactor biosynthesis; biotin biosynthesis; biotin from 7,8-diaminononanoate: step 2/2. Functionally, catalyzes the conversion of dethiobiotin (DTB) to biotin by the insertion of a sulfur atom into dethiobiotin via a radical-based mechanism. This is Biotin synthase from Carboxydothermus hydrogenoformans (strain ATCC BAA-161 / DSM 6008 / Z-2901).